The sequence spans 566 residues: MKMSRRAYAEMFGPTVGDRVRLADTELFIEVEQDLTTYGEEVKFGGGKVIRDGMGQSQLLADEVADTVITNALIVDWWGIVKADVGLKNGRIWKIGKAGNPDIQPDITIPLGAATEVIAGEGQILTAGGIDTHIHWICPQQVETALMSGVTTMVGGGTGPAAGTSATTVTPGPWHIGTMLQAIDDLPMNIGLLGKGNLSLPDPIREQIKAGVVGLKLHEDWGSTPAAIDNCLSVADEFDVQVAIHTDTLNESGFLEETLAAFKNRTIHTYHTEGAGGGHAPDILKAIGQANVLPSSTNPTRPYTINTIDEHLDMLMVCHHLDPAIAEDVAFAESRIRRETIAAEDILQDLGAIAMMSSDSQAMGRVGEVIIRTWQTAHKMKVQRGALQGDETSHDNSRVKRYIAKYTINPAITHGLSHEIGSVEEGKLADLVLWKPAFFGVKPSMIIKGGMIAAAPMGDINASIPTPQPVHYRPMFGAYPRGVHNTCITFLSQAAIDDGVAEKLKLKKLISPCKNTRQITKADMKHNTYCPVMDVHPETYEVRADGELLTCEPADVLPMAQRYFLF.

The Urease domain occupies 128-566; sequence GGIDTHIHWI…LPMAQRYFLF (439 aa). His-133, His-135, and Lys-216 together coordinate Ni(2+). N6-carboxylysine is present on Lys-216. His-218 contacts substrate. Positions 245 and 271 each coordinate Ni(2+). The Proton donor role is filled by His-319. Asp-359 is a binding site for Ni(2+).

The protein belongs to the metallo-dependent hydrolases superfamily. Urease alpha subunit family. In terms of assembly, heterotrimer of UreA (gamma), UreB (beta) and UreC (alpha) subunits. Three heterotrimers associate to form the active enzyme. The cofactor is Ni cation. In terms of processing, carboxylation allows a single lysine to coordinate two nickel ions.

Its subcellular location is the cytoplasm. The catalysed reaction is urea + 2 H2O + H(+) = hydrogencarbonate + 2 NH4(+). Its pathway is nitrogen metabolism; urea degradation; CO(2) and NH(3) from urea (urease route): step 1/1. This Acinetobacter baylyi (strain ATCC 33305 / BD413 / ADP1) protein is Urease subunit alpha.